The following is a 651-amino-acid chain: Chaperone protein dnaK1 (651 aa).

Phosphothreonine; by autocatalysis is present on Thr197.

It belongs to the heat shock protein 70 family.

Acts as a chaperone. This Thermosynechococcus vestitus (strain NIES-2133 / IAM M-273 / BP-1) protein is Chaperone protein dnaK1 (dnaK1).